Here is a 219-residue protein sequence, read N- to C-terminus: Kynurenine formamidase (219 aa).

Trp28 contacts substrate. Residues His58, His62, and Asp64 each contribute to the Zn(2+) site. Residue His68 is the Proton donor/acceptor of the active site. Zn(2+) is bound by residues His170 and Glu182.

It belongs to the Cyclase 1 superfamily. KynB family. As to quaternary structure, homodimer. It depends on Zn(2+) as a cofactor.

The enzyme catalyses N-formyl-L-kynurenine + H2O = L-kynurenine + formate + H(+). It participates in amino-acid degradation; L-tryptophan degradation via kynurenine pathway; L-kynurenine from L-tryptophan: step 2/2. In terms of biological role, catalyzes the hydrolysis of N-formyl-L-kynurenine to L-kynurenine, the second step in the kynurenine pathway of tryptophan degradation. The polypeptide is Kynurenine formamidase (Cupriavidus pinatubonensis (strain JMP 134 / LMG 1197) (Cupriavidus necator (strain JMP 134))).